Here is a 171-residue protein sequence, read N- to C-terminus: UPF0690 protein C1orf52 homolog A (171 aa).

Disordered regions lie at residues M1–E56 and N126–V171. A compositionally biased stretch (basic and acidic residues) spans E47 to E56. The segment covering E146–Q160 has biased composition (acidic residues).

It belongs to the UPF0690 family.

The protein is UPF0690 protein C1orf52 homolog A of Xenopus laevis (African clawed frog).